Here is a 280-residue protein sequence, read N- to C-terminus: Energy-coupling factor transporter ATP-binding protein EcfA2 (280 aa).

The ABC transporter domain occupies 3–245 (INLQNVSYTY…VSLLEKKQLG (243 aa)). 40–47 (GHTGSGKS) provides a ligand contact to ATP.

It belongs to the ABC transporter superfamily. Energy-coupling factor EcfA family. In terms of assembly, forms a stable energy-coupling factor (ECF) transporter complex composed of 2 membrane-embedded substrate-binding proteins (S component), 2 ATP-binding proteins (A component) and 2 transmembrane proteins (T component).

The protein localises to the cell membrane. Its function is as follows. ATP-binding (A) component of a common energy-coupling factor (ECF) ABC-transporter complex. Unlike classic ABC transporters this ECF transporter provides the energy necessary to transport a number of different substrates. This chain is Energy-coupling factor transporter ATP-binding protein EcfA2, found in Streptococcus pyogenes serotype M28 (strain MGAS6180).